We begin with the raw amino-acid sequence, 714 residues long: P-loop NTPase domain-containing protein LPA1 (714 aa).

The segment covering 1 to 11 (MPMPPQCASSK) has biased composition (low complexity). Disordered regions lie at residues 1-42 (MPMP…PPPK), 259-293 (QKLD…PRTE), and 595-689 (FGSE…GSGN). Over residues 271–285 (EGRDDTSDDKAHHGS) the composition is skewed to basic and acidic residues. Residues 595–617 (FGSEEDADDPPDAGTDEDLTDEE) show a composition bias toward acidic residues. The segment covering 618-636 (RDMHEIEAGSVDEHSTKSD) has biased composition (basic and acidic residues). Over residues 659–670 (AASSTKNSSNQE) the composition is skewed to polar residues.

Expressed in roots, leaf blade shoots, leaf sheath shoots and panicles.

Its function is as follows. Required for the accumulation of phytic acid in seeds. Phytic acid is the primary storage form of phosphorus in cereal grains and other plant seeds. The chain is P-loop NTPase domain-containing protein LPA1 from Oryza sativa subsp. japonica (Rice).